The primary structure comprises 399 residues: S-adenosylmethionine synthase (399 aa).

ATP is bound at residue histidine 16. Aspartate 18 is a binding site for Mg(2+). K(+) is bound at residue glutamate 44. 2 residues coordinate L-methionine: glutamate 57 and glutamine 100. Positions 100 to 110 (QSSDIAQGVNE) are flexible loop. Residues 177–179 (DAK), 244–245 (RF), aspartate 253, 259–260 (RK), alanine 276, and lysine 280 contribute to the ATP site. L-methionine is bound at residue aspartate 253. Lysine 284 serves as a coordination point for L-methionine.

It belongs to the AdoMet synthase family. As to quaternary structure, homotetramer; dimer of dimers. The cofactor is Mg(2+). Requires K(+) as cofactor.

The protein localises to the cytoplasm. The enzyme catalyses L-methionine + ATP + H2O = S-adenosyl-L-methionine + phosphate + diphosphate. The protein operates within amino-acid biosynthesis; S-adenosyl-L-methionine biosynthesis; S-adenosyl-L-methionine from L-methionine: step 1/1. Its function is as follows. Catalyzes the formation of S-adenosylmethionine (AdoMet) from methionine and ATP. The overall synthetic reaction is composed of two sequential steps, AdoMet formation and the subsequent tripolyphosphate hydrolysis which occurs prior to release of AdoMet from the enzyme. The protein is S-adenosylmethionine synthase of Lactococcus lactis subsp. lactis (strain IL1403) (Streptococcus lactis).